Reading from the N-terminus, the 92-residue chain is uncharacterized protein (92 aa).

A run of 3 helical transmembrane segments spans residues 1-21 (MNIY…LVGL), 30-50 (ANVL…IVVI), and 62-82 (IALA…KVIG).

This sequence to M.thermoautotrophicum MTH1250.

It is found in the cell membrane. This is an uncharacterized protein from Methanocaldococcus jannaschii (strain ATCC 43067 / DSM 2661 / JAL-1 / JCM 10045 / NBRC 100440) (Methanococcus jannaschii).